A 501-amino-acid chain; its full sequence is Putative antiporter subunit mnhD2 (501 aa).

A run of 14 helical transmembrane segments spans residues 4 to 24 (SNLLILPLLLPAVCALGLVFI), 33 to 53 (IFSIGTMAVTTVVSLLLLIYV), 79 to 99 (LSLLLVTTSSFVVTLIMAYGF), 109 to 129 (YYLPSFILFLTVGVIGSFLTA), 131 to 151 (LFNIYVMFEVMLLASFVLITL), 162 to 182 (IIYVVLNILGSWLLLLGVGLL), 207 to 227 (IVIVSMVFLIAFSAKAALVLF), 245 to 265 (FAALMTKVGAYALIRFFTLIF), 274 to 294 (PLLVFLSCITMLIGAFGVLAY), 309 to 329 (IGFIILGLGTNTIAGVNGAIF), 334 to 354 (DIVVKTLLFFIIGSLVYITGL), 369 to 389 (FFGVAFVVMILAIGGVPPFSG), 409 to 429 (LALMIITSLIAMFSLFRIFFV), and 452 to 472 (NLIGVLVAMIIVMGLAAPLLF).

The protein belongs to the CPA3 antiporters (TC 2.A.63) subunit D family. May form a heterooligomeric complex that consists of seven subunits: mnhA2, mnhB2, mnhC2, mnhD2, mnhE2, mnhF2 and mnhG2.

It localises to the cell membrane. This Staphylococcus saprophyticus subsp. saprophyticus (strain ATCC 15305 / DSM 20229 / NCIMB 8711 / NCTC 7292 / S-41) protein is Putative antiporter subunit mnhD2 (mnhD2).